A 276-amino-acid polypeptide reads, in one-letter code: Dermonecrotic toxin LsaSicTox-alphaIB2i (276 aa).

The active site involves His5. The Mg(2+) site is built by Glu25 and Asp27. The Nucleophile role is filled by His41. 2 cysteine pairs are disulfide-bonded: Cys45-Cys51 and Cys47-Cys190. Asp85 contacts Mg(2+). Residues Asn129 and Asn253 are each glycosylated (N-linked (GlcNAc...) asparagine).

It belongs to the arthropod phospholipase D family. Class II subfamily. Mg(2+) serves as cofactor. As to expression, expressed by the venom gland.

The protein resides in the secreted. It catalyses the reaction an N-(acyl)-sphingosylphosphocholine = an N-(acyl)-sphingosyl-1,3-cyclic phosphate + choline. The enzyme catalyses an N-(acyl)-sphingosylphosphoethanolamine = an N-(acyl)-sphingosyl-1,3-cyclic phosphate + ethanolamine. It carries out the reaction a 1-acyl-sn-glycero-3-phosphocholine = a 1-acyl-sn-glycero-2,3-cyclic phosphate + choline. The catalysed reaction is a 1-acyl-sn-glycero-3-phosphoethanolamine = a 1-acyl-sn-glycero-2,3-cyclic phosphate + ethanolamine. Functionally, dermonecrotic toxins cleave the phosphodiester linkage between the phosphate and headgroup of certain phospholipids (sphingolipid and lysolipid substrates), forming an alcohol (often choline) and a cyclic phosphate. This toxin acts on sphingomyelin (SM). It may also act on ceramide phosphoethanolamine (CPE), lysophosphatidylcholine (LPC) and lysophosphatidylethanolamine (LPE), but not on lysophosphatidylserine (LPS), and lysophosphatidylglycerol (LPG). It acts by transphosphatidylation, releasing exclusively cyclic phosphate products as second products. Induces dermonecrosis, hemolysis, increased vascular permeability, edema, inflammatory response, and platelet aggregation. The sequence is that of Dermonecrotic toxin LsaSicTox-alphaIB2i from Loxosceles sabina (Tucson recluse spider).